The primary structure comprises 411 residues: Dual-specificity RNA methyltransferase RlmN (411 aa).

The Proton acceptor role is filled by Glu-125. The Radical SAM core domain occupies 131 to 380 (EEGRGTLCIS…IRTPRGRDIL (250 aa)). Cys-138 and Cys-383 are oxidised to a cystine. [4Fe-4S] cluster is bound by residues Cys-145, Cys-149, and Cys-152. Residues 209 to 210 (GE), Ser-241, 263 to 265 (SLH), and Asn-340 each bind S-adenosyl-L-methionine. Cys-383 functions as the S-methylcysteine intermediate in the catalytic mechanism.

The protein belongs to the radical SAM superfamily. RlmN family. [4Fe-4S] cluster serves as cofactor.

It is found in the cytoplasm. It catalyses the reaction adenosine(2503) in 23S rRNA + 2 reduced [2Fe-2S]-[ferredoxin] + 2 S-adenosyl-L-methionine = 2-methyladenosine(2503) in 23S rRNA + 5'-deoxyadenosine + L-methionine + 2 oxidized [2Fe-2S]-[ferredoxin] + S-adenosyl-L-homocysteine. The enzyme catalyses adenosine(37) in tRNA + 2 reduced [2Fe-2S]-[ferredoxin] + 2 S-adenosyl-L-methionine = 2-methyladenosine(37) in tRNA + 5'-deoxyadenosine + L-methionine + 2 oxidized [2Fe-2S]-[ferredoxin] + S-adenosyl-L-homocysteine. Specifically methylates position 2 of adenine 2503 in 23S rRNA and position 2 of adenine 37 in tRNAs. m2A2503 modification seems to play a crucial role in the proofreading step occurring at the peptidyl transferase center and thus would serve to optimize ribosomal fidelity. The chain is Dual-specificity RNA methyltransferase RlmN from Brucella melitensis biotype 2 (strain ATCC 23457).